The following is a 309-amino-acid chain: ATP synthase gamma chain (309 aa).

The protein belongs to the ATPase gamma chain family. As to quaternary structure, F-type ATPases have 2 components, CF(1) - the catalytic core - and CF(0) - the membrane proton channel. CF(1) has five subunits: alpha(3), beta(3), gamma(1), delta(1), epsilon(1). CF(0) has three main subunits: a, b and c.

It is found in the cell membrane. Produces ATP from ADP in the presence of a proton gradient across the membrane. The gamma chain is believed to be important in regulating ATPase activity and the flow of protons through the CF(0) complex. The chain is ATP synthase gamma chain from Ligilactobacillus salivarius (strain UCC118) (Lactobacillus salivarius).